The sequence spans 261 residues: Caveolae-associated protein 3 (261 aa).

The interaction with CAVIN1 stretch occupies residues 1–84 (MRESALERGP…SNTLAQLLAK (84 aa)). Residues 20–78 (VHAVTVVTLLEKLASMLETLRERQGGLARRQGGLAGSVRRIQSGLGALSRSHDTTSNTL) are leucine-zipper. Phosphoserine occurs at positions 62 and 70. A Glycyl lysine isopeptide (Lys-Gly) (interchain with G-Cter in SUMO2) cross-link involves residue Lys-128. The tract at residues 135-203 (ASAFQKAPEP…SGRKGPAAPP (69 aa)) is interaction with CAV1. A disordered region spans residues 139–261 (QKAPEPLGPA…EALLQMESVA (123 aa)). The segment covering 158–170 (LEAEVGESSDEEP) has biased composition (acidic residues). 3 positions are modified to phosphoserine: Ser-165, Ser-166, and Ser-173. Residues 200 to 212 (AAPPPTPVKPPRL) are compositionally biased toward pro residues. The span at 213-231 (GPGRSAEAQPEAQPALEPT) shows a compositional bias: low complexity.

Belongs to the CAVIN family. Component of the CAVIN complex composed of CAVIN1, CAVIN2, CAVIN3 and CAVIN4. Interacts with PRKCD and with phosphatidylserine. Phosphatidylserine may form a bridge between PKC and PKC-binding partners and stabilize the binding. Interacts with PER2. Interacts with CAVIN1. Interacts (via leucine-zipper domain) with CAV1 in a cholesterol-sensitive manner. Interacts with EPS15L1. In vitro, phosphorylated by PRKCD. Skeletal muscle, liver, stomach, lung, kidney and heart (at protein level). Strongly expressed in mammary and epithelial cells.

The protein localises to the cytoplasm. Its subcellular location is the membrane. It localises to the caveola. The protein resides in the cytosol. In terms of biological role, regulates the traffic and/or budding of caveolae. Plays a role in caveola formation in a tissue-specific manner. Required for the formation of caveolae in smooth muscle but not in the lung and heart endothelial cells. Regulates the equilibrium between cell surface-associated and cell surface-dissociated caveolae by promoting the rapid release of caveolae from the cell surface. Plays a role in the regulation of the circadian clock. Modulates the period length and phase of circadian gene expression and also regulates expression and interaction of the core clock components PER1/2 and CRY1/2. This chain is Caveolae-associated protein 3, found in Homo sapiens (Human).